Reading from the N-terminus, the 280-residue chain is NAD kinase (280 aa).

D67 acts as the Proton acceptor in catalysis. NAD(+)-binding positions include 67–68 (DG), R72, 138–139 (ND), D167, A175, 178–183 (TAYSLS), and Q237.

The protein belongs to the NAD kinase family. It depends on a divalent metal cation as a cofactor.

The protein resides in the cytoplasm. It catalyses the reaction NAD(+) + ATP = ADP + NADP(+) + H(+). In terms of biological role, involved in the regulation of the intracellular balance of NAD and NADP, and is a key enzyme in the biosynthesis of NADP. Catalyzes specifically the phosphorylation on 2'-hydroxyl of the adenosine moiety of NAD to yield NADP. The polypeptide is NAD kinase (Aeropyrum pernix (strain ATCC 700893 / DSM 11879 / JCM 9820 / NBRC 100138 / K1)).